The primary structure comprises 460 residues: G2/mitotic-specific cyclin-4 (460 aa).

Belongs to the cyclin family. Cyclin AB subfamily.

Its function is as follows. Essential for the control of the cell cycle at the G2/M (mitosis) transition. Interacts with the CDC2 protein kinase to form MPF. G2/M cyclins accumulate steadily during G2 and are abruptly destroyed at mitosis. This chain is G2/mitotic-specific cyclin-4 (CLB4), found in Saccharomyces cerevisiae (strain ATCC 204508 / S288c) (Baker's yeast).